The primary structure comprises 222 residues: Small ribosomal subunit protein eS1 (222 aa).

The protein belongs to the eukaryotic ribosomal protein eS1 family.

This is Small ribosomal subunit protein eS1 from Pyrobaculum islandicum (strain DSM 4184 / JCM 9189 / GEO3).